Reading from the N-terminus, the 366-residue chain is Phospho-N-acetylmuramoyl-pentapeptide-transferase (366 aa).

The next 10 helical transmembrane spans lie at 27–47, 71–91, 93–113, 134–154, 174–194, 205–225, 245–265, 268–288, 294–314, and 343–363; these read AALFTSALIVFLFGPTIINSL, TPTMGGLMILAGIVGASLLWA, LSNVYVVATLLVTLGFGAIGF, LGIEFIIAGIAVYFMMRTALA, FLINLGIMFVVFGGFVIVGAG, GLAIVPVMIAAASFGVIAYLA, LAVVLGAVIGAGLGFLWFNAP, AIFMGDTGSLALGGTIGTVAV, IVMAIIGGLFVMETLSVIIQV, and QVVIRFWIIAVGLALLGLSTL.

Belongs to the glycosyltransferase 4 family. MraY subfamily. Mg(2+) serves as cofactor.

It is found in the cell inner membrane. The enzyme catalyses UDP-N-acetyl-alpha-D-muramoyl-L-alanyl-gamma-D-glutamyl-meso-2,6-diaminopimeloyl-D-alanyl-D-alanine + di-trans,octa-cis-undecaprenyl phosphate = di-trans,octa-cis-undecaprenyl diphospho-N-acetyl-alpha-D-muramoyl-L-alanyl-D-glutamyl-meso-2,6-diaminopimeloyl-D-alanyl-D-alanine + UMP. The protein operates within cell wall biogenesis; peptidoglycan biosynthesis. Its function is as follows. Catalyzes the initial step of the lipid cycle reactions in the biosynthesis of the cell wall peptidoglycan: transfers peptidoglycan precursor phospho-MurNAc-pentapeptide from UDP-MurNAc-pentapeptide onto the lipid carrier undecaprenyl phosphate, yielding undecaprenyl-pyrophosphoryl-MurNAc-pentapeptide, known as lipid I. In Rhizobium etli (strain CIAT 652), this protein is Phospho-N-acetylmuramoyl-pentapeptide-transferase.